The chain runs to 706 residues: ATP-dependent DNA helicase HMI1, mitochondrial (706 aa).

The 273-residue stretch at 5–277 folds into the UvrD-like helicase ATP-binding domain; the sequence is TPSQWKVINK…LKLFDNFRST (273 aa). ATP is bound by residues 29-34 and arginine 275; that span reads GSGKTL. The UvrD-like helicase C-terminal domain occupies 278 to 593; sequence PEIISLASKI…KLSTIHSAKG (316 aa). A propeptide spans 693 to 706 (cleaved upon import into mitochondrion); it reads YSSLRGCKSVFRRI.

It belongs to the helicase family. UvrD subfamily. It depends on Mg(2+) as a cofactor.

The protein localises to the mitochondrion inner membrane. It catalyses the reaction Couples ATP hydrolysis with the unwinding of duplex DNA by translocating in the 3'-5' direction.. It carries out the reaction ATP + H2O = ADP + phosphate + H(+). Required for mitochondrial genome maintenance and mitochondrial DNA inheritance. This Saccharomyces cerevisiae (strain ATCC 204508 / S288c) (Baker's yeast) protein is ATP-dependent DNA helicase HMI1, mitochondrial (HMI1).